Here is a 486-residue protein sequence, read N- to C-terminus: Serine/threonine-protein kinase 33 (486 aa).

A disordered region spans residues 39–100; sequence VVEMSQTSST…WGRGNFTEGK (62 aa). The span at 41–53 shows a compositional bias: polar residues; sequence EMSQTSSTGSSEF. Over residues 57-66 the composition is skewed to basic and acidic residues; that stretch reads PEKRKEKGAS. Residues 68–80 show a composition bias toward polar residues; it reads DVTSGKDSPSKSS. Residues 116 to 381 form the Protein kinase domain; that stretch reads YTFGRILGQG…AKELLDNQWL (266 aa). ATP contacts are provided by residues 122–130 and Lys145; that span reads LGQGSFGMV. The active-site Proton acceptor is the Asp238. Residues 402 to 451 form a disordered region; sequence KNNPESDEESTTDQRDSRSGQEESKVYQPSRNVPDVSNSSDEEEGKQVGR. Ser407 bears the Phosphoserine mark. Residues 413 to 426 are compositionally biased toward basic and acidic residues; it reads TDQRDSRSGQEESK. A compositionally biased stretch (polar residues) spans 428 to 440; that stretch reads YQPSRNVPDVSNS.

The protein belongs to the protein kinase superfamily. CAMK Ser/Thr protein kinase family. CaMK subfamily. In terms of assembly, interacts with vimentin/VIM. In terms of processing, autophosphorylated.

The protein localises to the cytoplasm. It localises to the perinuclear region. It carries out the reaction L-seryl-[protein] + ATP = O-phospho-L-seryl-[protein] + ADP + H(+). It catalyses the reaction L-threonyl-[protein] + ATP = O-phospho-L-threonyl-[protein] + ADP + H(+). Serine/threonine protein kinase which phosphorylates vimentin/VIM. Therefore may play a specific role in the dynamic behavior of the intermediate filament cytoskeleton. In Bos taurus (Bovine), this protein is Serine/threonine-protein kinase 33 (STK33).